The chain runs to 250 residues: Testis-expressed protein 101 (250 aa).

The first 25 residues, 1–25 (MGACRIQYILLVFLLIASHWTLVQN), serve as a signal peptide directing secretion. Residues asparagine 45, asparagine 110, asparagine 134, and asparagine 160 are each glycosylated (N-linked (GlcNAc...) asparagine). In terms of domain architecture, UPAR/Ly6 spans 141-215 (CPTCLALEPC…VKETCSYQSF (75 aa)). A lipid anchor (GPI-anchor amidated glycine) is attached at glycine 224. A propeptide spans 225–250 (ASWMPTSLWVLELLLPALSLPLIYFP) (removed in mature form).

Interacts with VAMP3. Interacts with LY6K. Interacts with DPEP3; co-localized on the cell surface of spermatocytes, spermatids, and testicular spermatozoa, co-localized only in cytoplasmic droplets of caput and corpus epididymal sperm. Interacts with ADAM5. Post-translationally, N-glycosylated; by high mannose and/or biantennary complex and/or certain types of hybrid oligosaccharides; possesses different oligosaccharides chains according to its subcellular localization in the testis. In terms of processing, sheds from membrane raft by ACE and released from the cell surface of epididymal sperm while it passes through the caput epididymis leading to disappearance of TEX101 on spermatozoa; is essential to produce fertile spermatozoa. In terms of tissue distribution, detected in testis.

It localises to the cell membrane. Its subcellular location is the membrane raft. The protein resides in the cytoplasmic vesicle. It is found in the secretory vesicle. The protein localises to the acrosome. It localises to the secreted. In terms of biological role, plays a role in fertilization by controlling binding of sperm to zona pellucida and migration of spermatozoa into the oviduct. May play a role in signal transduction and promote protein tyrosine phosphorylation. This chain is Testis-expressed protein 101, found in Rattus norvegicus (Rat).